The chain runs to 409 residues: Putative competence-damage inducible protein (409 aa).

It belongs to the CinA family.

This chain is Putative competence-damage inducible protein, found in Clostridium botulinum (strain Okra / Type B1).